The primary structure comprises 566 residues: E3 ubiquitin-protein ligase RNF220 (566 aa).

A Glycyl lysine isopeptide (Lys-Gly) (interchain with G-Cter in SUMO2) cross-link involves residue Lys277. Residues 277 to 297 (KREGESPTASPHSSATDDLHH) are disordered. Residue Ser390 is modified to Phosphoserine. Residues 485–513 (EDSAVTTFEALKARVRELERQLSRGDRYK) adopt a coiled-coil conformation. A required for targeting to the cytoplasm region spans residues 514 to 522 (CLICMDSYS). An RING-type zinc finger spans residues 514 to 553 (CLICMDSYSMPLTSIQCWHVHCEECWLRTLGAKKLCPQCN).

As to quaternary structure, interacts with SIN3B. Interacts with CTNNB1 (via Armadillo repeats 2-8). Interacts with USP7 (via MATH domain). Auto-ubiquitinated; leads to proteasomal degradation. In terms of tissue distribution, ubiquitously expressed. Abundant in brain and spinal cord, particularly in the cerebellum and cerebral cortex. In fetal tissues expressed in the cerebellum, spinal cord and cortex.

It localises to the cytoplasm. It is found in the nucleus. The enzyme catalyses S-ubiquitinyl-[E2 ubiquitin-conjugating enzyme]-L-cysteine + [acceptor protein]-L-lysine = [E2 ubiquitin-conjugating enzyme]-L-cysteine + N(6)-ubiquitinyl-[acceptor protein]-L-lysine.. It functions in the pathway protein modification; protein ubiquitination. In terms of biological role, E3 ubiquitin-protein ligase that promotes the ubiquitination and proteasomal degradation of SIN3B. Independently of its E3 ligase activity, acts as a CTNNB1 stabilizer through USP7-mediated deubiquitination of CTNNB1 promoting Wnt signaling. Plays a critical role in the regulation of nuclear lamina. This chain is E3 ubiquitin-protein ligase RNF220 (RNF220), found in Homo sapiens (Human).